Here is a 191-residue protein sequence, read N- to C-terminus: Ion-translocating oxidoreductase complex subunit B (191 aa).

The tract at residues 1–26 (MSSLWIAIAAVSAIALVSGLILGFAA) is hydrophobic. The 59-residue stretch at 32–90 (EADPIVERIDALLPQSQCGQCGYPGCRPYAEAVANGEKINRCAPGGEAVMRNIAALLAV) folds into the 4Fe-4S domain. The [4Fe-4S] cluster site is built by C49, C52, C57, C73, C116, C119, C122, C126, C146, C149, C152, and C156. 4Fe-4S ferredoxin-type domains are found at residues 107–136 (QVAL…GATR) and 137–166 (ALHT…LVPV).

This sequence belongs to the 4Fe4S bacterial-type ferredoxin family. RnfB subfamily. In terms of assembly, the complex is composed of six subunits: RnfA, RnfB, RnfC, RnfD, RnfE and RnfG. It depends on [4Fe-4S] cluster as a cofactor.

The protein localises to the cell inner membrane. Functionally, part of a membrane-bound complex that couples electron transfer with translocation of ions across the membrane. This Edwardsiella ictaluri (strain 93-146) protein is Ion-translocating oxidoreductase complex subunit B.